The following is a 229-amino-acid chain: ATP-dependent dethiobiotin synthetase BioD (229 aa).

ATP is bound at residue 12-17; the sequence is GVGKTV. Residue T16 coordinates Mg(2+). K37 is a catalytic residue. T41 contacts substrate. Residues D53, 112 to 115, and 201 to 203 each bind ATP; these read EGAG and PAG. Mg(2+) contacts are provided by D53 and E112.

Belongs to the dethiobiotin synthetase family. As to quaternary structure, homodimer. Requires Mg(2+) as cofactor.

It localises to the cytoplasm. The enzyme catalyses (7R,8S)-7,8-diammoniononanoate + CO2 + ATP = (4R,5S)-dethiobiotin + ADP + phosphate + 3 H(+). It functions in the pathway cofactor biosynthesis; biotin biosynthesis; biotin from 7,8-diaminononanoate: step 1/2. In terms of biological role, catalyzes a mechanistically unusual reaction, the ATP-dependent insertion of CO2 between the N7 and N8 nitrogen atoms of 7,8-diaminopelargonic acid (DAPA, also called 7,8-diammoniononanoate) to form a ureido ring. The sequence is that of ATP-dependent dethiobiotin synthetase BioD from Mycobacterium sp. (strain KMS).